A 611-amino-acid chain; its full sequence is MEPKEGGSPQATTLKRNKDKTMAKTFKKILKPGEKKKKQKAIVIAAIKQLIHYLETNCIELEGICRISGNNTKVKELKKQLENGEGDSIDFSKIDSHCVSGALKAFLRDGDEPLLTFDLYKNFLASIDIKDKNSKISFIKSLLSALPKENYDLLQILLKFLNTIQLHSSINKMTSSNLAIVFSPTLLRPKEESLESMMTDSNSISEVVRVLIEEFHVLYEIKQTLLYQVSAIDLGIREDKRSTSEQLEDAKVTIEQLKKHLNEEARERSILETYCTSMEQKLQELEDINKSLTEEKDSLGELLNEFKETNKNQANDINSLKNDIKDVTEKQTKTELERDELNKVKVKLEKDIETTRIELKSTNDECQKLKVNNNKLGEDIKNQMKEFEQTRKSLLENHKLEFEKHQLEIQQFRQENEQLKKEKTDADLQLERVQAEISILLSSSNDKNSKKNSLKNQKKDLDNALKKCKDQESKINQLEKEKSKLQDELTKLQKSSSSSSSSSSSSSSSQASHKFVFGKKPSSSKITTTTTTTTSPAQQPTTPPPPLDEDDIISVKKFAFYYMNLAIKTDAMTKGLPCNINSSEILEELLSKNIKVQQWSEVISKKLKENK.

In terms of domain architecture, Rho-GAP spans 24–219; the sequence is KTFKKILKPG…VLIEEFHVLY (196 aa). A coiled-coil region spans residues 236 to 499; the sequence is IREDKRSTSE…TKLQKSSSSS (264 aa). Residues 476–491 are compositionally biased toward basic and acidic residues; the sequence is NQLEKEKSKLQDELTK. The tract at residues 476 to 550 is disordered; that stretch reads NQLEKEKSKL…TTPPPPLDED (75 aa). 2 stretches are compositionally biased toward low complexity: residues 495 to 509 and 527 to 540; these read SSSS…SSSS and TTTT…AQQP.

It is found in the cytoplasm. Its function is as follows. Rho GTPase-activating protein involved in the signal transduction pathway. The protein is Rho GTPase-activating protein gacN (gacN) of Dictyostelium discoideum (Social amoeba).